The following is a 452-amino-acid chain: Retinoid-inducible serine carboxypeptidase (452 aa).

The N-terminal stretch at 1 to 26 is a signal peptide; that stretch reads MELALRRSPVPRWLLLLPLLLGLNAG. 2 N-linked (GlcNAc...) asparagine glycosylation sites follow: N64 and N126. S167 is an active-site residue. An N-linked (GlcNAc...) asparagine glycan is attached at N362. Active-site residues include D371 and H431.

This sequence belongs to the peptidase S10 family.

It localises to the secreted. In terms of biological role, may be involved in vascular wall and kidney homeostasis. The sequence is that of Retinoid-inducible serine carboxypeptidase (SCPEP1) from Homo sapiens (Human).